The chain runs to 404 residues: Cysteine desulfurase IscS (404 aa).

Residues 75-76 (AT), N155, Q183, and 203-205 (SAH) contribute to the pyridoxal 5'-phosphate site. K206 is modified (N6-(pyridoxal phosphate)lysine). Position 243 (T243) interacts with pyridoxal 5'-phosphate. The Cysteine persulfide intermediate role is filled by C328. A [2Fe-2S] cluster-binding site is contributed by C328.

This sequence belongs to the class-V pyridoxal-phosphate-dependent aminotransferase family. NifS/IscS subfamily. Homodimer. Forms a heterotetramer with IscU, interacts with other sulfur acceptors. Pyridoxal 5'-phosphate serves as cofactor.

The protein resides in the cytoplasm. The catalysed reaction is (sulfur carrier)-H + L-cysteine = (sulfur carrier)-SH + L-alanine. It participates in cofactor biosynthesis; iron-sulfur cluster biosynthesis. Functionally, master enzyme that delivers sulfur to a number of partners involved in Fe-S cluster assembly, tRNA modification or cofactor biosynthesis. Catalyzes the removal of elemental sulfur atoms from cysteine to produce alanine. Functions as a sulfur delivery protein for Fe-S cluster synthesis onto IscU, an Fe-S scaffold assembly protein, as well as other S acceptor proteins. The polypeptide is Cysteine desulfurase IscS (Azotobacter vinelandii (strain DJ / ATCC BAA-1303)).